The following is a 161-amino-acid chain: Globin CTT-VIIB-4 (161 aa).

Positions 1-16 (MKFFAVLALCIVGAIA) are cleaved as a signal peptide. Positions 18 to 161 (PLTADEASLV…NTMAVAVAHL (144 aa)) constitute a Globin domain. Positions 76 and 111 each coordinate heme b.

It belongs to the globin family. Homodimer.

The chain is Globin CTT-VIIB-4 (CTT-7B4) from Chironomus thummi thummi (Midge).